The chain runs to 421 residues: DNA (cytosine-5)-methyltransferase 3-like (421 aa).

Over residues 1–14 (MGSRETPSSCSKTL) the composition is skewed to polar residues. A disordered region spans residues 1-39 (MGSRETPSSCSKTLETLDLETSDSSSPDADSPLEEQWLK). The region spanning 75 to 207 (EVKVNRRSIE…LKAFHDQEGA (133 aa)) is the ADD domain. Residues 86-116 (ICLCCGTLQVYTRHPLFEGGLCAPCKDKFLE) form a GATA-type; atypical zinc finger. The PHD-type; atypical zinc-finger motif lies at 127–183 (QSYCTICCSGGTLFICESPDCTRCYCFECVDILVGPGTSERINAMACWVCFLCLPFS).

Homodimer. Heterotetramer composed of 1 DNMT3A homodimer and 2 DNMT3L subunits (DNMT3L-DNMT3A-DNMT3A-DNMT3L). Interacts with histone H3 (via N-terminus); interaction is strongly inhibited by methylation at lysine 4 (H3K4me). Interacts with EZH2; the interaction is direct. Interacts with SPOCD1. As to expression, expressed in testis, thymus, ovary, and heart.

The protein localises to the nucleus. In terms of biological role, catalytically inactive regulatory factor of DNA methyltransferases that can either promote or inhibit DNA methylation depending on the context. Essential for the function of DNMT3A and DNMT3B: activates DNMT3A and DNMT3B by binding to their catalytic domain. Acts by accelerating the binding of DNA and S-adenosyl-L-methionine (AdoMet) to the methyltransferases and dissociates from the complex after DNA binding to the methyltransferases. Recognizes unmethylated histone H3 lysine 4 (H3K4me0) and induces de novo DNA methylation by recruitment or activation of DNMT3. Plays a key role in embryonic stem cells and germ cells. In germ cells, required for the methylation of imprinted loci together with DNMT3A. In male germ cells, specifically required to methylate retrotransposons, preventing their mobilization. Plays a key role in embryonic stem cells (ESCs) by acting both as an positive and negative regulator of DNA methylation. While it promotes DNA methylation of housekeeping genes together with DNMT3A and DNMT3B, it also acts as an inhibitor of DNA methylation at the promoter of bivalent genes. Interacts with the EZH2 component of the PRC2/EED-EZH2 complex, preventing interaction of DNMT3A and DNMT3B with the PRC2/EED-EZH2 complex, leading to maintain low methylation levels at the promoters of bivalent genes. Promotes differentiation of ESCs into primordial germ cells by inhibiting DNA methylation at the promoter of RHOX5, thereby activating its expression. The sequence is that of DNA (cytosine-5)-methyltransferase 3-like (Dnmt3l) from Mus musculus (Mouse).